We begin with the raw amino-acid sequence, 479 residues long: UDP-N-acetylmuramate--L-alanine ligase (479 aa).

115 to 121 lines the ATP pocket; the sequence is GTHGKTT.

This sequence belongs to the MurCDEF family.

Its subcellular location is the cytoplasm. It catalyses the reaction UDP-N-acetyl-alpha-D-muramate + L-alanine + ATP = UDP-N-acetyl-alpha-D-muramoyl-L-alanine + ADP + phosphate + H(+). It functions in the pathway cell wall biogenesis; peptidoglycan biosynthesis. Its function is as follows. Cell wall formation. This Acidiphilium cryptum (strain JF-5) protein is UDP-N-acetylmuramate--L-alanine ligase.